We begin with the raw amino-acid sequence, 455 residues long: Peroxisomal membrane protein PEX3 (455 aa).

A compositionally biased stretch (polar residues) spans 113–125 (TVLSDDFSTSQEG). The segment at 113–135 (TVLSDDFSTSQEGAISEDTNKPP) is disordered. A helical transmembrane segment spans residues 155–171 (FLTLIYCESLLIVFLHL).

Belongs to the peroxin-3 family. Component of the peroxisomal docking complex, composed of at least PEX3, PEX13, PEX14 and PEX17. Component of the peroxisomal translocation complex, composed of at least PEX3, PEX2, PEX10 and PEX12. Interacts with PEX19. Interacts with the pexophagy receptor ATG30.

It localises to the peroxisome membrane. Peroxisomal membrane protein required for peroxisome biosynthesis. Shared component of both the peroxisomal docking complex and the peroxisomal translocation complex. The two types of peroxisomal matrix targeting signals, PTS1 and PTS2, are first recognized in the cytosol by their receptors PEX5 and PEX7, respectively, which then carry the cargo to the peroxisomal membrane. The peroxisomal targeting signal (PTS) receptor-cargo complexes interact with peroxisomal membrane protein (PMP) components of the docking complex. They have then additional downstream interactions with the translocation complex, leading to the transport of fully folded and oligomerized cargo into the peroxisome matrix. PEX3 acts as an anchoring site for PEX19 on the peroxisomal membrane and thus plays a crucial role in the assembly of the peroxisomal translocation complex. Is also essential for the interaction between the two complexes. Finally. PEX3 activates selective autophagy of peroxisomes (pexophagy) via interaction with the pexophagy receptor ATG30. The chain is Peroxisomal membrane protein PEX3 from Komagataella pastoris (Yeast).